Here is a 218-residue protein sequence, read N- to C-terminus: Probable transaldolase (218 aa).

Lys-83 (schiff-base intermediate with substrate) is an active-site residue.

Belongs to the transaldolase family. Type 3B subfamily.

Its subcellular location is the cytoplasm. The catalysed reaction is D-sedoheptulose 7-phosphate + D-glyceraldehyde 3-phosphate = D-erythrose 4-phosphate + beta-D-fructose 6-phosphate. The protein operates within carbohydrate degradation; pentose phosphate pathway; D-glyceraldehyde 3-phosphate and beta-D-fructose 6-phosphate from D-ribose 5-phosphate and D-xylulose 5-phosphate (non-oxidative stage): step 2/3. Its function is as follows. Transaldolase is important for the balance of metabolites in the pentose-phosphate pathway. This chain is Probable transaldolase, found in Parvibaculum lavamentivorans (strain DS-1 / DSM 13023 / NCIMB 13966).